We begin with the raw amino-acid sequence, 158 residues long: MSIEGVFREGFVTTSLDAVINWTRTGSLWPMTFGLACCAVEMIHAGCARYDLDRFGVVFRPSPRQSDLMIVAGTLCNKMAPALRKVYDQMAEPRWVISMGSCANGGGYYHYSYSVVRGCDRIVPVDVYVPGCPPTAEALLYGIIQLQNKIKRTNTIAR.

C37, C38, C102, and C132 together coordinate [4Fe-4S] cluster.

It belongs to the complex I 20 kDa subunit family. NDH-1 is composed of 14 different subunits. Subunits NuoB, C, D, E, F, and G constitute the peripheral sector of the complex. It depends on [4Fe-4S] cluster as a cofactor.

It localises to the cell inner membrane. The enzyme catalyses a quinone + NADH + 5 H(+)(in) = a quinol + NAD(+) + 4 H(+)(out). In terms of biological role, NDH-1 shuttles electrons from NADH, via FMN and iron-sulfur (Fe-S) centers, to quinones in the respiratory chain. Couples the redox reaction to proton translocation (for every two electrons transferred, four hydrogen ions are translocated across the cytoplasmic membrane), and thus conserves the redox energy in a proton gradient. This chain is NADH-quinone oxidoreductase subunit B, found in Aromatoleum aromaticum (strain DSM 19018 / LMG 30748 / EbN1) (Azoarcus sp. (strain EbN1)).